The chain runs to 233 residues: Ribose-5-phosphate isomerase A (233 aa).

Substrate is bound by residues 28–31, 83–86, and 96–99; these read SGST, DGAD, and KGGG. Glu-105 (proton acceptor) is an active-site residue. Lys-123 contributes to the substrate binding site.

This sequence belongs to the ribose 5-phosphate isomerase family. As to quaternary structure, homodimer.

The enzyme catalyses aldehydo-D-ribose 5-phosphate = D-ribulose 5-phosphate. Its pathway is carbohydrate degradation; pentose phosphate pathway; D-ribose 5-phosphate from D-ribulose 5-phosphate (non-oxidative stage): step 1/1. Functionally, catalyzes the reversible conversion of ribose-5-phosphate to ribulose 5-phosphate. The sequence is that of Ribose-5-phosphate isomerase A from Maricaulis maris (strain MCS10) (Caulobacter maris).